A 404-amino-acid chain; its full sequence is Ubiquitin-like modifier-activating enzyme 5 (404 aa).

Positions 83, 104, 127, 150, and 184 each coordinate ATP. The Zn(2+) site is built by Cys226 and Cys229. The Glycyl thioester intermediate role is filled by Cys250. Zn(2+) contacts are provided by Cys303 and Cys308. The segment at 372-404 (APEKSSETSEETVSAATADETSLEDLMAQMKSM) is disordered. Residues 382-391 (ETVSAATADE) show a composition bias toward low complexity.

Belongs to the ubiquitin-activating E1 family. UBA5 subfamily. In terms of assembly, interacts (via C-terminus) with Ufc1. Interacts with Ufm1.

It localises to the cytoplasm. It is found in the nucleus. The protein resides in the golgi apparatus. Its function is as follows. E1-like enzyme which activates UFM1. The protein is Ubiquitin-like modifier-activating enzyme 5 of Drosophila melanogaster (Fruit fly).